The primary structure comprises 283 residues: MKQYLDLCQRIIDEGVWIENQRTNKRCLTVINADLVYDVRNNQFPIITTRKSFWKAAIAELLGYIRGYDNAADFRALGTKSWDANANENEAWLKNPARKGLDDMGRVYGVQGRHWKTHDGTELDQLGKIVANLSKGIDDRGEILTFHNPGEFNLGCLRPCMHTHTFSLLGDTLYLTSYQRSCDVPLGLNFNQIQVFTLLALMAQITGNKPGLAYHKIVNAHIYEDQIELMRDVQLKRKPYPSPKLEINPDIKSLKDLETWVTLDDFNVTGYQHHDAIKYPFSV.

R22 is a binding site for dUMP. Residue C160 is the Nucleophile of the active site. Residues 180–183 (RSCD), N191, and 221–223 (HIY) each bind dUMP. D183 serves as a coordination point for (6R)-5,10-methylene-5,6,7,8-tetrahydrofolate. S282 serves as a coordination point for (6R)-5,10-methylene-5,6,7,8-tetrahydrofolate.

This sequence belongs to the thymidylate synthase family. Bacterial-type ThyA subfamily. Homodimer.

It is found in the cytoplasm. It carries out the reaction dUMP + (6R)-5,10-methylene-5,6,7,8-tetrahydrofolate = 7,8-dihydrofolate + dTMP. Its pathway is pyrimidine metabolism; dTTP biosynthesis. Catalyzes the reductive methylation of 2'-deoxyuridine-5'-monophosphate (dUMP) to 2'-deoxythymidine-5'-monophosphate (dTMP) while utilizing 5,10-methylenetetrahydrofolate (mTHF) as the methyl donor and reductant in the reaction, yielding dihydrofolate (DHF) as a by-product. This enzymatic reaction provides an intracellular de novo source of dTMP, an essential precursor for DNA biosynthesis. In Tolumonas auensis (strain DSM 9187 / NBRC 110442 / TA 4), this protein is Thymidylate synthase.